Consider the following 268-residue polypeptide: MTLQKKIIELLGVKPAIIPEIEIKNCVDFLKKYLVNHVHIKSLIVGVSGGQDSTLTAKLCQMTAETLRKEKNDITYQFIALRLPYGIQYDEKDCQDAIRFIQPDQIFNVNIKKAVLSSEKSLKKSGVIISDYVRGNEKARERMKVQYSIAAMKQGLVVGTGHAAENITGFFTKYGDSGTDINPIAKLNKRQIRLLLKNLNCPKHLYLKKPMADLEDEHPQQDDESVLGVTYDAIDSYLEQKKIDIRSQKIIEALYLNTLHKRNLPITQ.

46–53 (GVSGGQDS) lines the ATP pocket. Residue Asp52 participates in Mg(2+) binding. Arg140 serves as a coordination point for deamido-NAD(+). Residue Thr160 coordinates ATP. Glu165 contributes to the Mg(2+) binding site. 2 residues coordinate deamido-NAD(+): Lys173 and Asp180. Position 189 (Lys189) interacts with ATP. 260–261 (HK) lines the deamido-NAD(+) pocket.

This sequence belongs to the NAD synthetase family. In terms of assembly, homodimer.

It carries out the reaction deamido-NAD(+) + NH4(+) + ATP = AMP + diphosphate + NAD(+) + H(+). It functions in the pathway cofactor biosynthesis; NAD(+) biosynthesis; NAD(+) from deamido-NAD(+) (ammonia route): step 1/1. Functionally, catalyzes the ATP-dependent amidation of deamido-NAD to form NAD. Uses ammonia as a nitrogen source. This chain is NH(3)-dependent NAD(+) synthetase, found in Buchnera aphidicola subsp. Acyrthosiphon pisum (strain APS) (Acyrthosiphon pisum symbiotic bacterium).